A 231-amino-acid chain; its full sequence is 7-cyano-7-deazaguanine synthase (231 aa).

ATP is bound at residue 8–18 (FSGGQDSTTCL). Cysteine 188, cysteine 197, cysteine 200, and cysteine 203 together coordinate Zn(2+).

It belongs to the QueC family. It depends on Zn(2+) as a cofactor.

It catalyses the reaction 7-carboxy-7-deazaguanine + NH4(+) + ATP = 7-cyano-7-deazaguanine + ADP + phosphate + H2O + H(+). The protein operates within purine metabolism; 7-cyano-7-deazaguanine biosynthesis. In terms of biological role, catalyzes the ATP-dependent conversion of 7-carboxy-7-deazaguanine (CDG) to 7-cyano-7-deazaguanine (preQ(0)). The protein is 7-cyano-7-deazaguanine synthase of Salmonella newport (strain SL254).